The following is a 450-amino-acid chain: Bifunctional protein GlmU (450 aa).

The interval 1-226 is pyrophosphorylase; it reads MLAVAVLAAG…PDEVNGINNR (226 aa). UDP-N-acetyl-alpha-D-glucosamine contacts are provided by residues 7–10, lysine 21, glutamine 73, and 78–79; these read LAAG and GT. A Mg(2+)-binding site is contributed by aspartate 103. The UDP-N-acetyl-alpha-D-glucosamine site is built by glycine 140, glutamate 155, asparagine 170, and asparagine 224. Mg(2+) is bound at residue asparagine 224. The tract at residues 227–247 is linker; that stretch reads KQLAQCEGVLQQRLRDYWMDE. Positions 248-450 are N-acetyltransferase; it reads GVTFVDPASC…TKDNWANRSI (203 aa). 2 residues coordinate UDP-N-acetyl-alpha-D-glucosamine: arginine 329 and lysine 347. Histidine 359 (proton acceptor) is an active-site residue. UDP-N-acetyl-alpha-D-glucosamine is bound by residues tyrosine 362 and asparagine 373. Acetyl-CoA-binding positions include alanine 376, 382 to 383, alanine 419, and arginine 436; that span reads NY.

In the N-terminal section; belongs to the N-acetylglucosamine-1-phosphate uridyltransferase family. This sequence in the C-terminal section; belongs to the transferase hexapeptide repeat family. Homotrimer. Requires Mg(2+) as cofactor.

It is found in the cytoplasm. The catalysed reaction is alpha-D-glucosamine 1-phosphate + acetyl-CoA = N-acetyl-alpha-D-glucosamine 1-phosphate + CoA + H(+). It catalyses the reaction N-acetyl-alpha-D-glucosamine 1-phosphate + UTP + H(+) = UDP-N-acetyl-alpha-D-glucosamine + diphosphate. The protein operates within nucleotide-sugar biosynthesis; UDP-N-acetyl-alpha-D-glucosamine biosynthesis; N-acetyl-alpha-D-glucosamine 1-phosphate from alpha-D-glucosamine 6-phosphate (route II): step 2/2. Its pathway is nucleotide-sugar biosynthesis; UDP-N-acetyl-alpha-D-glucosamine biosynthesis; UDP-N-acetyl-alpha-D-glucosamine from N-acetyl-alpha-D-glucosamine 1-phosphate: step 1/1. It participates in bacterial outer membrane biogenesis; LPS lipid A biosynthesis. Catalyzes the last two sequential reactions in the de novo biosynthetic pathway for UDP-N-acetylglucosamine (UDP-GlcNAc). The C-terminal domain catalyzes the transfer of acetyl group from acetyl coenzyme A to glucosamine-1-phosphate (GlcN-1-P) to produce N-acetylglucosamine-1-phosphate (GlcNAc-1-P), which is converted into UDP-GlcNAc by the transfer of uridine 5-monophosphate (from uridine 5-triphosphate), a reaction catalyzed by the N-terminal domain. This Synechococcus sp. (strain CC9902) protein is Bifunctional protein GlmU.